Reading from the N-terminus, the 64-residue chain is uncharacterized protein (64 aa).

It localises to the host cytoplasm. This is an uncharacterized protein from Enterobacteriaceae (Bacteriophage Mu).